The following is a 306-amino-acid chain: LysM and putative peptidoglycan-binding domain-containing protein 3 (306 aa).

At 1–217 (MAGRHQNRSF…PYYGADWGIG (217 aa)) the chain is on the extracellular side. Asn7 carries N-linked (GlcNAc...) asparagine glycosylation. Ser55 bears the Phosphoserine mark. One can recognise a LysM domain in the interval 65–109 (LTKDIQEGDTLNAIALQYCCTVADIKRVNNLISDQDFFALRSIKI). The chain crosses the membrane as a helical span at residues 218 to 238 (WWTAVVIMLIVGIITPVFYLL). Residues 239-306 (YYEILAKVDV…SQSPAAQQET (68 aa)) are Cytoplasmic-facing.

It localises to the cell membrane. The protein resides in the golgi apparatus. In terms of biological role, essential for Golgi structural integrity. The chain is LysM and putative peptidoglycan-binding domain-containing protein 3 (LYSMD3) from Homo sapiens (Human).